The following is a 184-amino-acid chain: MYELAGELLTLSIMAFALGMDAFSVGLGMGMIQLRFRQIIYIGLVIGIFHMFMPLFGMLTGQLLSGWLGLLATYIGGALLLVLGLQMIIASIRKEDKPFIAPVGAGLVLFATSVSLDSFSVGLSLGIYGSHVWMTILLFGFFSMILTWLGLLLGKQVRSWVGSYSGALGGIILLAFGIKLLFPL.

The next 6 membrane-spanning stretches (helical) occupy residues Ser-12–Ile-32, Ile-39–Leu-59, Leu-63–Leu-83, Phe-99–Phe-119, Val-132–Leu-152, and Tyr-164–Leu-184.

Belongs to the MntP (TC 9.B.29) family.

It localises to the cell membrane. In terms of biological role, probably functions as a manganese efflux pump. The polypeptide is Putative manganese efflux pump MntP (Bacillus pumilus (strain SAFR-032)).